The chain runs to 353 residues: Photosystem II D2 protein (353 aa).

N-acetylthreonine is present on Thr2. Thr2 is subject to Phosphothreonine. The helical transmembrane segment at 41 to 61 (CAYFALGGWFTGTTFVTSWYT) threads the bilayer. His118 contacts chlorophyll a. A helical membrane pass occupies residues 125–141 (GFMLRQFELARSVQLRP). Residues Gln130 and Asn143 each contribute to the pheophytin a site. Residues 153-166 (VFVSVFLIYPLGQS) traverse the membrane as a helical segment. Position 198 (His198) interacts with chlorophyll a. A helical membrane pass occupies residues 208 to 228 (AALLCAIHGATVENTLFEDGD). His215 and Phe262 together coordinate a plastoquinone. His215 provides a ligand contact to Fe cation. A Fe cation-binding site is contributed by His269. A helical transmembrane segment spans residues 279-295 (GLWMSAIGVVGLALNLR).

It belongs to the reaction center PufL/M/PsbA/D family. In terms of assembly, PSII is composed of 1 copy each of membrane proteins PsbA, PsbB, PsbC, PsbD, PsbE, PsbF, PsbH, PsbI, PsbJ, PsbK, PsbL, PsbM, PsbT, PsbX, PsbY, PsbZ, Psb30/Ycf12, at least 3 peripheral proteins of the oxygen-evolving complex and a large number of cofactors. It forms dimeric complexes. The D1/D2 heterodimer binds P680, chlorophylls that are the primary electron donor of PSII, and subsequent electron acceptors. It shares a non-heme iron and each subunit binds pheophytin, quinone, additional chlorophylls, carotenoids and lipids. There is also a Cl(-1) ion associated with D1 and D2, which is required for oxygen evolution. The PSII complex binds additional chlorophylls, carotenoids and specific lipids. serves as cofactor.

The protein resides in the plastid. It localises to the chloroplast thylakoid membrane. The catalysed reaction is 2 a plastoquinone + 4 hnu + 2 H2O = 2 a plastoquinol + O2. Functionally, photosystem II (PSII) is a light-driven water:plastoquinone oxidoreductase that uses light energy to abstract electrons from H(2)O, generating O(2) and a proton gradient subsequently used for ATP formation. It consists of a core antenna complex that captures photons, and an electron transfer chain that converts photonic excitation into a charge separation. The D1/D2 (PsbA/PsbD) reaction center heterodimer binds P680, the primary electron donor of PSII as well as several subsequent electron acceptors. D2 is needed for assembly of a stable PSII complex. The protein is Photosystem II D2 protein of Oryza nivara (Indian wild rice).